Consider the following 130-residue polypeptide: Holo-[acyl-carrier-protein] synthase (130 aa).

Mg(2+) contacts are provided by D9 and E58.

This sequence belongs to the P-Pant transferase superfamily. AcpS family. Requires Mg(2+) as cofactor.

The protein resides in the cytoplasm. It catalyses the reaction apo-[ACP] + CoA = holo-[ACP] + adenosine 3',5'-bisphosphate + H(+). Its function is as follows. Transfers the 4'-phosphopantetheine moiety from coenzyme A to a Ser of acyl-carrier-protein. This is Holo-[acyl-carrier-protein] synthase from Mycobacterium bovis (strain ATCC BAA-935 / AF2122/97).